A 275-amino-acid chain; its full sequence is Phosphate import ATP-binding protein PstB (275 aa).

The ABC transporter domain maps to 29-270; the sequence is LEIKDLDLYY…PNKKKTEDYI (242 aa). An ATP-binding site is contributed by 61–68; that stretch reads GPSGCGKS.

The protein belongs to the ABC transporter superfamily. Phosphate importer (TC 3.A.1.7) family. In terms of assembly, the complex is composed of two ATP-binding proteins (PstB), two transmembrane proteins (PstC and PstA) and a solute-binding protein (PstS).

It localises to the cell inner membrane. It carries out the reaction phosphate(out) + ATP + H2O = ADP + 2 phosphate(in) + H(+). Part of the ABC transporter complex PstSACB involved in phosphate import. Responsible for energy coupling to the transport system. The sequence is that of Phosphate import ATP-binding protein PstB from Pseudoalteromonas translucida (strain TAC 125).